The sequence spans 692 residues: MKKNSQIRAKIIELREKIEKWNHHYYQLQNPLVDDLVYDKTLRELEKLERENFFLFSLEELNQSPSQKVGSKITSKFEKVAHSSPMLSLNKAYSNEELEKWAKKASEILKTVTFFVEPKIDGIALSLFYQNGNLIKALTRGDGVFGENVLVNALKINDEFIPKKINYLEDLEVRGEIYIDNSTFASLQLETKKFKNPRNAASGILRRYKNHKPKIDAKSIKFLEEESDFRYLKSFFYTLVNPEKHKINSQFDSINFLRNLGFQVNPFQKKCSDLKDVFNFISIIKQKRDFLNYNIDGVVVKVNEFSIYEKLGSTSKFPHSAIAFKFEDDIAKTKLLAIFATIGRTGKVTYNAKIEPVTLAGSKISSAILPNYSYIENLKLNLNTEVYIKKAGEIIPQIIGSVHNYPKTNFSIVKNCPKCNSELVNSESGLDQFCQNQFCPEIILQKIVHFCSKNALNIESLAQKRIEKFLEKGLISSACDIFYLKDKLELIYERLSNKNQLLTKQNASQSMQIKSIMKLLNEVERAKNIDFYRLIFGLGIRNVGLKAAKILSRYASNLSELRNLDFNLLKNQHDFGPVIIESLIDYFNNQKNSEQLNCLETVGFNFKTTFLTNQSNSWASFAISGKLSKPRDEYVRIIEESGASFHESLTKKTDFLLLGQSAGSKIEKAKKAGIKIINEVQFFDLIKNSKKT.

Residues 35 to 39 (DLVYD), 88 to 89 (SL), and Glu117 contribute to the NAD(+) site. Residue Lys119 is the N6-AMP-lysine intermediate of the active site. NAD(+) is bound by residues Arg140, Glu176, Lys301, and Lys325. Positions 416, 419, 434, and 439 each coordinate Zn(2+). In terms of domain architecture, BRCT spans 611 to 692 (LTNQSNSWAS…FDLIKNSKKT (82 aa)).

The protein belongs to the NAD-dependent DNA ligase family. LigA subfamily. Requires Mg(2+) as cofactor. The cofactor is Mn(2+).

It catalyses the reaction NAD(+) + (deoxyribonucleotide)n-3'-hydroxyl + 5'-phospho-(deoxyribonucleotide)m = (deoxyribonucleotide)n+m + AMP + beta-nicotinamide D-nucleotide.. Functionally, DNA ligase that catalyzes the formation of phosphodiester linkages between 5'-phosphoryl and 3'-hydroxyl groups in double-stranded DNA using NAD as a coenzyme and as the energy source for the reaction. It is essential for DNA replication and repair of damaged DNA. This chain is DNA ligase, found in Mesomycoplasma hyopneumoniae (strain J / ATCC 25934 / NCTC 10110) (Mycoplasma hyopneumoniae).